Here is a 488-residue protein sequence, read N- to C-terminus: Metalloreductase STEAP3 (488 aa).

Residues 1–207 (MSGEMDKPLI…AREVEAIPLR (207 aa)) are Cytoplasmic-facing. Phosphoserine is present on residues S11, S17, and S20. NADP(+)-binding positions include 36-39 (SGDF), 58-59 (SR), 91-98 (VFREHYSS), N116, and A151. Residues W152 and D160 each coordinate FAD. A helical membrane pass occupies residues 208–228 (LLPSWKVPTLLALGLFVCFYA). Residue Y229 participates in Fe(3+) binding. The Vesicular segment spans residues 229-258 (YNFIRDVLQPYIRKDENKFYKMPLSVVNTT). Residue N256 is glycosylated (N-linked (GlcNAc...) asparagine). Residues 259-279 (LPCVAYVLLSLVYLPGVLAAA) traverse the membrane as a helical segment. Residues 259–407 (LPCVAYVLLS…LGFVALMLST (149 aa)) form the Ferric oxidoreductase domain. Residues 280–304 (LQLRRGTKYQRFPDWLDHWLQHRKQ) are Cytoplasmic-facing. FAD contacts are provided by Q281, R302, and K303. The helical transmembrane segment at 305-325 (IGLLSFFFAMLHALYSFCLPL) threads the bilayer. H316 lines the heme b pocket. Residue Y319 coordinates Fe(3+). Topologically, residues 326-358 (RRSHRYDLVNLAVKQVLANKSRLWVEEEVWRME) are vesicular. Residues 359 to 379 (IYLSLGVLALGMLSLLAVTSI) traverse the membrane as a helical segment. FAD is bound at residue S378. Over 380–390 (PSIANSLNWKE) the chain is Cytoplasmic. The chain crosses the membrane as a helical span at residues 391-411 (FSFVQSTLGFVALMLSTMHTL). Q395 lines the FAD pocket. Heme b is bound at residue H409. Residues 412-433 (TYGWTRAFEENHYKFYLPPTFT) lie on the Vesicular side of the membrane. A helical membrane pass occupies residues 434–454 (LTLLLPCVIILAKGLFLLPCL). The Cytoplasmic portion of the chain corresponds to 455–488 (SHRLTKIRRGWERDGAVKFMLPAGHTQGEKTSHV). Phosphoserine is present on S486.

It belongs to the STEAP family. As to quaternary structure, homodimer. Interacts with BNIP3L, MYT1, RHBDL4/RHBDD1 and TCTP. FAD is required as a cofactor. The cofactor is heme b. In terms of processing, proteolytically cleaved by RHBDL4/RHBDD1. RHBDL4/RHBDD1-induced cleavage occurs at multiple sites in a glycosylation-independent manner. Post-translationally, glycosylated.

Its subcellular location is the endosome membrane. The catalysed reaction is 2 Fe(2+) + NADP(+) + H(+) = 2 Fe(3+) + NADPH. It catalyses the reaction 2 Cu(+) + NADP(+) + H(+) = 2 Cu(2+) + NADPH. Its function is as follows. Integral membrane protein that functions as a NADPH-dependent ferric-chelate reductase, using NADPH from one side of the membrane to reduce a Fe(3+) chelate that is bound on the other side of the membrane. Mediates sequential transmembrane electron transfer from NADPH to FAD and onto heme, and finally to the Fe(3+) chelate. Can also reduce Cu(2+) to Cu(1+). Mediates efficient transferrin-dependent iron uptake in erythroid cells. May play a role downstream of p53/TP53 to interface apoptosis and cell cycle progression. Indirectly involved in exosome secretion by facilitating the secretion of proteins such as TCTP. The sequence is that of Metalloreductase STEAP3 (Steap3) from Rattus norvegicus (Rat).